Here is a 421-residue protein sequence, read N- to C-terminus: Enolase (421 aa).

Glutamine 162 contributes to the (2R)-2-phosphoglycerate binding site. The active-site Proton donor is the glutamate 204. The Mg(2+) site is built by aspartate 241, glutamate 284, and aspartate 311. The (2R)-2-phosphoglycerate site is built by lysine 336, arginine 365, serine 366, and lysine 387. Residue lysine 336 is the Proton acceptor of the active site.

This sequence belongs to the enolase family. The cofactor is Mg(2+).

The protein resides in the cytoplasm. The protein localises to the secreted. It is found in the cell surface. The catalysed reaction is (2R)-2-phosphoglycerate = phosphoenolpyruvate + H2O. It participates in carbohydrate degradation; glycolysis; pyruvate from D-glyceraldehyde 3-phosphate: step 4/5. Its function is as follows. Catalyzes the reversible conversion of 2-phosphoglycerate (2-PG) into phosphoenolpyruvate (PEP). It is essential for the degradation of carbohydrates via glycolysis. The chain is Enolase from Nautilia profundicola (strain ATCC BAA-1463 / DSM 18972 / AmH).